We begin with the raw amino-acid sequence, 161 residues long: Nucleotide-binding protein Gura_0717 (161 aa).

The protein belongs to the YajQ family.

Functionally, nucleotide-binding protein. This chain is Nucleotide-binding protein Gura_0717, found in Geotalea uraniireducens (strain Rf4) (Geobacter uraniireducens).